The chain runs to 408 residues: Cytochrome bc1 complex Rieske iron-sulfur subunit (408 aa).

Transmembrane regions (helical) follow at residues 56-76 (VGIW…TYIF), 98-118 (MLGI…VLYV), and 166-186 (LLAG…GGMI). In terms of domain architecture, Rieske spans 293–390 (HGPRNAVMLI…ITVDEEGYLI (98 aa)). 4 residues coordinate [2Fe-2S] cluster: cysteine 333, histidine 335, cysteine 352, and histidine 355. A disulfide bridge links cysteine 338 with cysteine 354.

Belongs to the Rieske iron-sulfur protein family. As to quaternary structure, the cytochrome bc1 complex is composed of a cytochrome b (QcrB), the Rieske iron-sulfur protein (QcrA) and a diheme cytochrome c (QcrC) subunit. The bc1 complex forms a supercomplex with cytochrome c oxidase (cytochrome aa3). Requires [2Fe-2S] cluster as cofactor.

It is found in the cell membrane. In terms of biological role, iron-sulfur subunit of the cytochrome bc1 complex, an essential component of the respiratory electron transport chain required for ATP synthesis. The bc1 complex catalyzes the oxidation of menaquinol and the reduction of cytochrome c in the respiratory chain. The bc1 complex operates through a Q-cycle mechanism that couples electron transfer to generation of the proton gradient that drives ATP synthesis. The polypeptide is Cytochrome bc1 complex Rieske iron-sulfur subunit (qcrA) (Corynebacterium efficiens (strain DSM 44549 / YS-314 / AJ 12310 / JCM 11189 / NBRC 100395)).